Reading from the N-terminus, the 523-residue chain is Glycerate kinase (523 aa).

A Phosphoserine modification is found at Ser60. Position 200 is an N6-acetyllysine (Lys200).

It belongs to the glycerate kinase type-2 family.

It is found in the cytoplasm. It carries out the reaction (R)-glycerate + ATP = (2R)-3-phosphoglycerate + ADP + H(+). This chain is Glycerate kinase (Glyctk), found in Rattus norvegicus (Rat).